A 435-amino-acid polypeptide reads, in one-letter code: Xylose isomerase (435 aa).

Active-site residues include H99 and D102. 7 residues coordinate Mg(2+): E230, E266, H269, D294, D305, D307, and D337.

The protein belongs to the xylose isomerase family. In terms of assembly, homotetramer. It depends on Mg(2+) as a cofactor.

It is found in the cytoplasm. The catalysed reaction is alpha-D-xylose = alpha-D-xylulofuranose. This Tetragenococcus halophilus (Pediococcus halophilus) protein is Xylose isomerase (xylA).